We begin with the raw amino-acid sequence, 749 residues long: MDQDIKTVIQYPVGATEFDIPFDYLSRKFVRVSLVADDNRRLLSNITEYRYVSKTRVKLLVETTGFDRVEIRRFTSASERIVDFSDGSVLRAADLNVSQIQSAHIAEEARDAALMAMPEDDAGNLDARNRKIVRLAPGEAGTDAINKNQLDETLGEAGGILSDFEDVRDEIIQYISKFTDDTGAVRGVSYVYNNGRALGGETGFHIDITPPPLGVPYLSINGSKQYRGYHFTYDPITGNVQGLATPLEKDDFVVATTTESVTPIEDLYASTQGASMIGTLSGSTVEERIAEVEQSVLDSIDGIRVDSFIGMTDSGAIDAAIAEALRVNSYVKFSPRVYTVDRPVILPSKTVLVGTQGLTKIVASASWNGPVVMSKDAPAGDYLTINVPSAMVYGVYIFGIIIESGWKGTTDDSRYHTECLRIYGAGTILKGVRVGKCRGDGANLGGRGLTAIDYGAPSLYSDVRADLIGKNGITIGGSSDNHTQNIVVRNAGLLEHDVYYCIGIGPGGGTRGNEYHTWHSGDAQITPLYQNRPKYGLYLAGWDTYITNGHFEGAASAQIANFGGRNQVTNVRAYSTWDQDKCTVLVAGPAFKFVGNIGAPMNNVPANRCHAFQLGTADIQVNQVEITAQVNGQKFVNYVNAGGSNSIAVRGTLGIAGASGIGTLVTGTVPDDNELTIIAEPYKGKRLGLNLILTGDKGLTCRDVNSTGQISGVNALLTGKVMLTGLSSDIPTTPGTVYVDSNGNLKVKL.

This sequence in the N-terminal section; belongs to the Teseptimavirus fiber family. Interacts (via N-terminus) with depolymerase 2 (via N-terminus); this interaction probably gives rise to a branched tailspike.

The protein localises to the virion. In terms of biological role, functions as a receptor binding protein (RBP) and probably mediates the attachment to the host capsular exopolysaccharides. Displays a depolymerase activity that specifically degrades the K8-type polysaccharides of Klebsiella pneumoniae capsule, which allows the phage to reach the host cell membrane and bind the entry receptor. This is Depolymerase 1, capsule K8-specific from Klebsiella (Bacteriophage K5-4).